A 994-amino-acid polypeptide reads, in one-letter code: Phosphoenolpyruvate carboxylase (994 aa).

Positions 1–67 (MKAVRSDKTT…GRTREDKDHP (67 aa)) are disordered. Low complexity-rich tracts occupy residues 9 to 24 (TTQAATTAQAQKPAKA) and 34 to 57 (AAPQAANASARQPASAQAPAPKAN). Active-site residues include His204 and Lys646.

It belongs to the PEPCase type 1 family. Mg(2+) serves as cofactor.

The catalysed reaction is oxaloacetate + phosphate = phosphoenolpyruvate + hydrogencarbonate. Functionally, forms oxaloacetate, a four-carbon dicarboxylic acid source for the tricarboxylic acid cycle. In Paraburkholderia xenovorans (strain LB400), this protein is Phosphoenolpyruvate carboxylase.